The following is a 122-amino-acid chain: Large ribosomal subunit protein bL17 (122 aa).

It belongs to the bacterial ribosomal protein bL17 family. Part of the 50S ribosomal subunit. Contacts protein L32.

This chain is Large ribosomal subunit protein bL17, found in Nautilia profundicola (strain ATCC BAA-1463 / DSM 18972 / AmH).